A 188-amino-acid polypeptide reads, in one-letter code: MLQLHPSDIKDIILQGGVIAYPTEAVYGLGCDPDNDTAIQKLLAVKQRPWQKGLILVASDFQQLLAYVDESQLTAEQLEFAFSKWPGPFTFVMPIKAHVSKYLCGEFDSIAVRVSAHAGVQALCRALNKPLVSTSANLAGEDPALTAAEILADFTGKIDALVLGELGEQRQPSTIIDARSGKILRNGQ.

The YrdC-like domain occupies 3–188 (QLHPSDIKDI…RSGKILRNGQ (186 aa)).

This sequence belongs to the SUA5 family. TsaC subfamily.

The protein localises to the cytoplasm. The enzyme catalyses L-threonine + hydrogencarbonate + ATP = L-threonylcarbamoyladenylate + diphosphate + H2O. Its function is as follows. Required for the formation of a threonylcarbamoyl group on adenosine at position 37 (t(6)A37) in tRNAs that read codons beginning with adenine. Catalyzes the conversion of L-threonine, HCO(3)(-)/CO(2) and ATP to give threonylcarbamoyl-AMP (TC-AMP) as the acyladenylate intermediate, with the release of diphosphate. This Shewanella baltica (strain OS155 / ATCC BAA-1091) protein is Threonylcarbamoyl-AMP synthase.